A 174-amino-acid chain; its full sequence is Guided entry of tail-anchored proteins factor 1 (174 aa).

The Lumenal segment spans residues 1–8 (MSSAAADH). A helical transmembrane segment spans residues 9–29 (WAWLLVLSFVFGCNVLRVLLP). The Cytoplasmic segment spans residues 30–99 (SFSSFMSRVL…VKARTAQLAK (70 aa)). Residues 39–94 (LQKDAEQESQMRAEIQDMKQELSTVNMMDEFARYARLERKINKMTDKLKTHVKART) adopt a coiled-coil conformation. Positions 39-97 (LQKDAEQESQMRAEIQDMKQELSTVNMMDEFARYARLERKINKMTDKLKTHVKARTAQL) are interaction with GET3/TRC40. The helical transmembrane segment at 100–120 (IKWVISVAFYVLQAALMISLI) threads the bilayer. Over 121-148 (WKYYSVPVAVVPSKWITPLDRLVAFPTR) the chain is Lumenal. The chain crosses the membrane as a helical span at residues 149–169 (VAGGVGITCWILVCNKVVAIV). At 170–174 (LHPFS) the chain is on the cytoplasmic side.

Belongs to the WRB/GET1 family. As to quaternary structure, component of the Golgi to ER traffic (GET) complex, which is composed of GET1/WRB, CAMLG/GET2 and GET3. Within the complex, GET1 and CAMLG form a heterotetramer which is stabilized by phosphatidylinositol binding and which binds to the GET3 homodimer. Interacts with CAMLG (via C-terminus). GET3 shows a higher affinity for CAMLG than for GET1.

It localises to the endoplasmic reticulum membrane. Functionally, required for the post-translational delivery of tail-anchored (TA) proteins to the endoplasmic reticulum. Together with CAMLG/GET2, acts as a membrane receptor for soluble GET3/TRC40, which recognizes and selectively binds the transmembrane domain of TA proteins in the cytosol. Required to ensure correct topology and ER insertion of CAMLG. In Pongo abelii (Sumatran orangutan), this protein is Guided entry of tail-anchored proteins factor 1.